The primary structure comprises 623 residues: MTQTDRDAENGRDREKDREKEQQRGVKRPIMPAAVPEPVQEQIQANFIVVIHPGSRTLRLGRATDTLPISVPHVIARRHKHPGQSRYEDKCLLREGLNSADSNEQRQNGLKMVDQVIWSKKMSNGVRRTPVSAEQARLYNRQIRPAVLDPNSKVSWTNTSHHPEYVVGEEALYVNPTDCYSVHWPVCRGRLNLHSGSGGSLSAVMMDLEHIWTHALQKLLQIPLKDLKYYRCILLIPDIYNRQHVKEIVNMLLVKMGFSAVVVHQESVCATFGSGLSSACVVDVGDQKTSVCCVEDGVSHRSSRLCLAYGGSDVTRCFFWLMQRAGFPYRDCQLGNKLDCVLLQQLKESFCHLDQDISGLQDHEFRTRFPDSPVLLYQLRLGDEKLQAPMTLFYPAAFGIVGQRMTSLLHRSQGDAEDPHDEHFLLTTQSKQDQSSKASADRKSFPKPSSFEGESSVCEVSDRSSLGQDLDLGHSQAECLVGGAETEETPSALLSRKTAMSQFEGKALGIDKAILHSIDSCASDETKRKMYSCILVVGGGLLFHGAQEFLQHRILNKMPPSFRCMVESVDVITRPKDTDARVCVWKGGSVLACLDTTQELWIHQREWQRFGVRMLRERAAFVW.

Residues 1-24 (MTQTDRDAENGRDREKDREKEQQR) are compositionally biased toward basic and acidic residues. A disordered region spans residues 1 to 29 (MTQTDRDAENGRDREKDREKEQQRGVKRP). 283 to 286 (DVGD) contributes to the ATP binding site. The span at 428–438 (TQSKQDQSSKA) shows a compositional bias: low complexity. The segment at 428-458 (TQSKQDQSSKASADRKSFPKPSSFEGESSVC) is disordered.

It belongs to the actin family. ARP8 subfamily. In terms of assembly, component of the chromatin remodeling INO80 complex; specifically part of a complex module associated with the DBINO domain of INO80. Exists as monomers and dimers, but the dimer is most probably the biologically relevant form required for stable interactions with histones that exploits the twofold symmetry of the nucleosome core.

Its subcellular location is the nucleus. The protein resides in the chromosome. Functionally, plays an important role in the functional organization of mitotic chromosomes. Exhibits low basal ATPase activity, and unable to polymerize. In terms of biological role, proposed core component of the chromatin remodeling INO80 complex which is involved in transcriptional regulation, DNA replication and probably DNA repair. Required for the recruitment of INO80 (and probably the INO80 complex) to sites of DNA damage Strongly prefer nucleosomes and H3-H4 tetramers over H2A-H2B dimers, suggesting it may act as a nucleosome recognition module within the complex. This chain is Actin-related protein 8 (actr8), found in Danio rerio (Zebrafish).